We begin with the raw amino-acid sequence, 450 residues long: Protein tweety homolog 1 (450 aa).

Over 1 to 43 (MGAPPGYRPSAWVHLLHQLPRADFQLRPVPSGFAPQEQEYQQA) the chain is Extracellular. Residues 44–64 (LLLVAALAGLGLGLSLIFIAV) traverse the membrane as a helical segment. Residues 65–88 (YLIRFCCCRPPEPPGSKTPSPGGG) are Cytoplasmic-facing. A helical transmembrane segment spans residues 89–109 (CVTWSCIVALLAGCIGIGIGF). Residues 110-214 (YGNSETSDGV…DVSFVEEYRW (105 aa)) lie on the Extracellular side of the membrane. A glycan (N-linked (GlcNAc...) asparagine) is linked at N130. Residues 215–235 (LAYVLLLLLELLVCLFTLLGL) form a helical membrane-spanning segment. The Cytoplasmic segment spans residues 236 to 240 (AKQSK). Residues 241 to 261 (WLVIVMTVMSLLVLVLSWGSM) form a helical membrane-spanning segment. Over 262–390 (GLEAATAVGL…LRGLCEDALE (129 aa)) the chain is Extracellular. 2 N-linked (GlcNAc...) asparagine glycosylation sites follow: N284 and N355. C303 and C370 are joined by a disulfide. Residues 391 to 411 (GLLFLLLFSLLSAGALATALC) traverse the membrane as a helical segment. Residues 412–450 (SLPRAWALFPPSDDYDDTDDDDPFNPQESKRFVQWQSSI) are Cytoplasmic-facing. The tract at residues 428-450 (DTDDDDPFNPQESKRFVQWQSSI) is disordered. Position 440 is a phosphoserine (S440).

It belongs to the tweety family. As to quaternary structure, homotetramer; disulfide-linked. Homodimer. N-glycosylated. Contains high-mannose, hybrid and complex oligosaccharides.

Its subcellular location is the cell membrane. It carries out the reaction chloride(in) = chloride(out). It catalyses the reaction L-glutamate(out) = L-glutamate(in). In terms of biological role, calcium-independent, swelling-dependent volume-regulated anion channel (VRAC-swell) which plays a pivotal role in the process of regulatory volume decrease (RVD) in the brain through the efflux of anions like chloride and organic osmolytes like glutamate. This Macaca fascicularis (Crab-eating macaque) protein is Protein tweety homolog 1 (TTYH1).